The sequence spans 355 residues: Syntaxin-5 (355 aa).

Over 1 to 333 the chain is Cytoplasmic; sequence MIPRKRYGSK…KYFQSVTSNR (333 aa). A compositionally biased stretch (polar residues) spans 28–37; the sequence is PATAGSSSSD. Residues 28-47 form a disordered region; it reads PATAGSSSSDIAPLPPPVAL. An IxM motif; signal for cargo packaging into COPII-coated vesicles motif is present at residues 245–247; the sequence is IDM. The t-SNARE coiled-coil homology domain occupies 263–325; it reads DSYIQSRADT…EAAHSEILKY (63 aa). Residues 287-318 are a coiled coil; that stretch reads FQQLAHMVKEQEETIQRIDENVLGAQLDVEAA. Residues 334–354 traverse the membrane as a helical; Anchor for type IV membrane protein segment; it reads WLMVKIFLILIVFFIIFVVFL. Residue alanine 355 is a topological domain, vesicular.

This sequence belongs to the syntaxin family. Part of a ternary complex containing STX5A, NSFL1C and VCP. Part of a unique SNARE complex composed of the Golgi SNAREs GOSR1, GOSR2 and YKT6. This complex also includes VTI1A. Component of a SNARE complex consisting of STX5, YKT6, GOSR1 and BET1L. Interacts with BET1L. Interacts with BET1. Interacts with COG4. Interacts with GM130/GOLGA2. Interacts (via IxM motif) with SEC24C and SEC24D; mediates STX5 packaging into COPII-coated vesicles. Interacts with VLDLR; this interaction mediates VLDLR translocation from the endoplasmic reticulum to the plasma membrane.

The protein localises to the endoplasmic reticulum-Golgi intermediate compartment membrane. It localises to the golgi apparatus membrane. In terms of biological role, mediates endoplasmic reticulum to Golgi transport. Together with p115/USO1 and GM130/GOLGA2, involved in vesicle tethering and fusion at the cis-Golgi membrane to maintain the stacked and inter-connected structure of the Golgi apparatus. The protein is Syntaxin-5 (STX5) of Bos taurus (Bovine).